Consider the following 297-residue polypeptide: Bax inhibitor 1 (297 aa).

Residues 1-53 lie on the Lumenal side of the membrane; sequence MSGPPPPYEEQSSHLYGQPASSQDGNAFIPEDFKYSTVVISCEPIIRQRFMHK. Residues 54–74 traverse the membrane as a helical segment; that stretch reads VYSLLSCQLLASLSFCYWASV. Residues 75 to 85 are Cytoplasmic-facing; sequence STSLQNFIMSH. A helical membrane pass occupies residues 86-106; sequence IALFYICMVVSLVSCIWLAVS. At 107–146 the chain is on the lumenal side; sequence PRPEDYEASVPEPLLTGSSEEPAQEQRRLPWYVLSSYKQK. Residues 147 to 167 form a helical membrane-spanning segment; sequence LTLLSIFTLSEAYCLSLVTLA. At 168 to 171 the chain is on the cytoplasmic side; the sequence is YDKD. A helical membrane pass occupies residues 172-192; the sequence is TVLSALLITTIVVVGVSLTAL. At 193–208 the chain is on the lumenal side; that stretch reads SERFENVLNSATSIYY. A helical transmembrane segment spans residues 209-229; the sequence is WLNWGLWIMIGMGLTALLFGW. Over 230–239 the chain is Cytoplasmic; that stretch reads NTHSSKFNLL. A helical transmembrane segment spans residues 240–260; sequence YGWLGAILFTAYLFIDTQLIF. Over 261–270 the chain is Lumenal; the sequence is RKVYPDEEVR. The helical transmembrane segment at 271–291 threads the bilayer; it reads CAMMLYLDIVNLFLSILRILA. Topologically, residues 292–297 are cytoplasmic; the sequence is NSNDDN.

This sequence belongs to the BI1 family. LFG subfamily.

The protein localises to the endoplasmic reticulum membrane. Its subcellular location is the vacuole membrane. It is found in the mitochondrion membrane. Its function is as follows. Links the unfolded protein response and programmed cell death and mediates mitochondrial-dependent apoptosis. Induces cell death and disruption of the mitochondrial transmembrane potential via the mitochondrial phosphate carrier MIR1. Dispensible for starvation-induced autophagy. The protein is Bax inhibitor 1 (BXI1) of Saccharomyces cerevisiae (strain ATCC 204508 / S288c) (Baker's yeast).